We begin with the raw amino-acid sequence, 432 residues long: MKFTLVATVLLTFSLSAFAVEYPVLTTASPDQVGFDSQKLHRLDGWIQNQIDAGYPSINLLVIKDNHIVLQKAWGYAKKYDGSTLLAHPIRATTNTMYDLASNTKMYATNFALQKLVYEGKIDVNDLVSKYIPGFKDMPGDKIKGKDKLRIIDILHHVAGFPADPQYPNKNVAGKLFSQSKSTTLEMIKKTPLEYQPGSKHIYSDVDYMILGFIVESITAMPLDRYVETTIYKPLGLKHTVFNPLMKGFTPPQIAATELHGNTRDGVIHFPNIRTNTLWGQVHDEKAWYSMGGVSGHAGLFSDTHDMAVLMQVMLNGGGYGNVKLFDDKTVAQFTRRSPEDATFGLGWRVNGNASMTPTFGVLASPQTYGHTGWTGTLTSIDPVNHMAIVILGNRPHSPVANPKVNPNVFVSGLLPAATYGWIVDRIYGSLK.

A helical; Signal-anchor transmembrane segment spans residues 7 to 25 (ATVLLTFSLSAFAVEYPVL).

It belongs to the peptidase S12 family. YfeW subfamily.

The protein resides in the cell inner membrane. The catalysed reaction is Preferential cleavage: (Ac)2-L-Lys-D-Ala-|-D-Ala. Also transpeptidation of peptidyl-alanyl moieties that are N-acyl substituents of D-alanine.. The sequence is that of Putative D-alanyl-D-alanine carboxypeptidase from Salmonella schwarzengrund (strain CVM19633).